We begin with the raw amino-acid sequence, 342 residues long: Putative ABC transporter anion-binding protein HVO_1888 (342 aa).

The tat-type signal signal peptide spans 1 to 32 (MAIERRRFLQAAGVGAVLGLSGCTGNTSPPQA). A compositionally biased stretch (polar residues) spans 24–37 (TGNTSPPQANNETA). Positions 24-52 (TGNTSPPQANNETAEGSGGSESGDGSTQE) are disordered.

The complex is composed of two ATP-binding proteins (HVO_1886), two transmembrane proteins (HVO_1887) and a solute-binding protein (HVO_1888). Predicted to be exported by the Tat system. The position of the signal peptide cleavage has not been experimentally proven.

Its function is as follows. Part of an ABC transporter complex involved in anions import. In Haloferax volcanii (strain ATCC 29605 / DSM 3757 / JCM 8879 / NBRC 14742 / NCIMB 2012 / VKM B-1768 / DS2) (Halobacterium volcanii), this protein is Putative ABC transporter anion-binding protein HVO_1888.